Consider the following 255-residue polypeptide: Diphthine synthase (255 aa).

S-adenosyl-L-methionine-binding positions include leucine 9, aspartate 85, valine 88, 113–114, leucine 164, alanine 207, and histidine 232; that span reads SI.

Belongs to the diphthine synthase family. Homodimer.

The enzyme catalyses 2-[(3S)-amino-3-carboxypropyl]-L-histidyl-[translation elongation factor 2] + 3 S-adenosyl-L-methionine = diphthine-[translation elongation factor 2] + 3 S-adenosyl-L-homocysteine + 3 H(+). It participates in protein modification; peptidyl-diphthamide biosynthesis. Its function is as follows. S-adenosyl-L-methionine-dependent methyltransferase that catalyzes the trimethylation of the amino group of the modified target histidine residue in translation elongation factor 2 (EF-2), to form an intermediate called diphthine. The three successive methylation reactions represent the second step of diphthamide biosynthesis. The sequence is that of Diphthine synthase from Methanococcus maripaludis (strain C5 / ATCC BAA-1333).